A 238-amino-acid chain; its full sequence is Neuromodulin (238 aa).

A disordered region spans residues methionine 1–alanine 238. 2 S-palmitoyl cysteine lipidation sites follow: cysteine 3 and cysteine 4. Residues lysine 9–histidine 32 are compositionally biased toward basic and acidic residues. The region spanning alanine 31–glutamine 60 is the IQ domain. Serine 41 carries the phosphoserine; by PHK and PKC modification. Over residues glutamate 54–glutamate 83 the composition is skewed to basic and acidic residues. Low complexity predominate over residues glycine 84 to glycine 95. Over residues lysine 97–glycine 116 the composition is skewed to basic and acidic residues. Residues alanine 119–serine 130 show a composition bias toward low complexity. A compositionally biased stretch (polar residues) spans glutamate 139–serine 154. Residues serine 151, serine 153, and serine 154 each carry the phosphoserine modification. Residues lysine 155–glutamine 167 are compositionally biased toward basic and acidic residues. Over residues alanine 168–threonine 199 the composition is skewed to low complexity. Threonine 181 is subject to Phosphothreonine. Serine 202 and serine 203 each carry phosphoserine; by CK2. Positions aspartate 213–glutamate 225 are enriched in basic and acidic residues. Residues glycine 226–alanine 238 are compositionally biased toward acidic residues.

Belongs to the neuromodulin family. Identified in a complex containing FGFR4, NCAM1, CDH2, PLCG1, FRS2, SRC, SHC1, GAP43 and CTTN. Interacts (via IQ domain) with calmodulin. Binds calmodulin with a greater affinity in the absence of Ca(2+) than in its presence. Post-translationally, phosphorylated. Phosphorylation of this protein by a protein kinase C is specifically correlated with certain forms of synaptic plasticity. Palmitoylated by ZDHHC3. Palmitoylation is regulated by ARF6 and is essential for plasma membrane association and axonal and dendritic filopodia induction. Deacylated by LYPLA2.

It localises to the cell membrane. The protein resides in the cell projection. Its subcellular location is the growth cone membrane. The protein localises to the synapse. It is found in the filopodium membrane. It localises to the perikaryon. The protein resides in the dendrite. Its subcellular location is the axon. The protein localises to the cytoplasm. Its function is as follows. This protein is associated with nerve growth. It is a major component of the motile 'growth cones' that form the tips of elongating axons. Plays a role in axonal and dendritic filopodia induction. This is Neuromodulin (GAP43) from Homo sapiens (Human).